We begin with the raw amino-acid sequence, 164 residues long: 2-C-methyl-D-erythritol 2,4-cyclodiphosphate synthase (164 aa).

2 residues coordinate a divalent metal cation: D9 and H11. 4-CDP-2-C-methyl-D-erythritol 2-phosphate contacts are provided by residues 9-11 (DVH) and 35-36 (HS). H43 provides a ligand contact to a divalent metal cation. 4-CDP-2-C-methyl-D-erythritol 2-phosphate is bound by residues 57–59 (DIG), 62–66 (FPDTD), 133–136 (TTTE), F140, and R143.

Belongs to the IspF family. Homotrimer. Requires a divalent metal cation as cofactor.

It catalyses the reaction 4-CDP-2-C-methyl-D-erythritol 2-phosphate = 2-C-methyl-D-erythritol 2,4-cyclic diphosphate + CMP. Its pathway is isoprenoid biosynthesis; isopentenyl diphosphate biosynthesis via DXP pathway; isopentenyl diphosphate from 1-deoxy-D-xylulose 5-phosphate: step 4/6. Involved in the biosynthesis of isopentenyl diphosphate (IPP) and dimethylallyl diphosphate (DMAPP), two major building blocks of isoprenoid compounds. Catalyzes the conversion of 4-diphosphocytidyl-2-C-methyl-D-erythritol 2-phosphate (CDP-ME2P) to 2-C-methyl-D-erythritol 2,4-cyclodiphosphate (ME-CPP) with a corresponding release of cytidine 5-monophosphate (CMP). This Syntrophotalea carbinolica (strain DSM 2380 / NBRC 103641 / GraBd1) (Pelobacter carbinolicus) protein is 2-C-methyl-D-erythritol 2,4-cyclodiphosphate synthase.